The primary structure comprises 93 residues: Acylphosphatase (93 aa).

An Acylphosphatase-like domain is found at 4-91 (TLHLVIHGRV…PAGTGFRVAA (88 aa)). Active-site residues include R19 and N37.

Belongs to the acylphosphatase family.

The catalysed reaction is an acyl phosphate + H2O = a carboxylate + phosphate + H(+). This chain is Acylphosphatase (acyP), found in Azorhizobium caulinodans (strain ATCC 43989 / DSM 5975 / JCM 20966 / LMG 6465 / NBRC 14845 / NCIMB 13405 / ORS 571).